A 486-amino-acid chain; its full sequence is MTATVNEAPASTSKGATGRIARVIGPVVDVEFSADTMPDQNNALTTQVTMGGTTQTVTLEVASHLGDNMVRAISLKPTDGMVRGAAVVDTGAPISVPVGNATLGHVFNAIGECLNLEEGEQLEVHERWPIHRKAPNFDQLESRTTMFETGIKVIDLLTPYVQGGKIGLFGGAGVGKTVLIQEMIQRVAQNHGGVSVFAGVGERTREGNDLIGEMAEAGVFDKTALVFGQMDEPPGTRLRVALSALTMAEYFRDVQNQDVLLFIDNIFRFTQAGSEVSTLLGRMPSAVGYQPTLADEMGVLQERITSTRGHSITSLQAIYVPADDYTDPAPATTFAHLDATTELSREIASRGLYPAVDPLTSTSRILDPLYIAQDHYDTAVRVKQILQRNKELQDIIAILGVDELSEEDKLTVSRARRIQQFLSQNTYMAEKFTGVEGSTVPLKETIEGFSKIADGELDHVAEQAFFNVGGLEDVERNWARIQKETA.

170–177 (GGAGVGKT) provides a ligand contact to ATP.

The protein belongs to the ATPase alpha/beta chains family. As to quaternary structure, F-type ATPases have 2 components, CF(1) - the catalytic core - and CF(0) - the membrane proton channel. CF(1) has five subunits: alpha(3), beta(3), gamma(1), delta(1), epsilon(1). CF(0) has three main subunits: a(1), b(2) and c(9-12). The alpha and beta chains form an alternating ring which encloses part of the gamma chain. CF(1) is attached to CF(0) by a central stalk formed by the gamma and epsilon chains, while a peripheral stalk is formed by the delta and b chains.

It localises to the cell membrane. The enzyme catalyses ATP + H2O + 4 H(+)(in) = ADP + phosphate + 5 H(+)(out). In terms of biological role, produces ATP from ADP in the presence of a proton gradient across the membrane. The catalytic sites are hosted primarily by the beta subunits. In Kineococcus radiotolerans (strain ATCC BAA-149 / DSM 14245 / SRS30216), this protein is ATP synthase subunit beta.